The sequence spans 515 residues: Protein translocase subunit SecD (515 aa).

The next 6 membrane-spanning stretches (helical) occupy residues 5 to 25 (LIAK…LATP), 353 to 373 (KGIL…VAYY), 375 to 395 (LSGL…MGLL), 398 to 418 (FGAT…GIAV), 450 to 470 (FSTI…LFQF), and 477 to 497 (GFAV…ILCT).

It belongs to the SecD/SecF family. SecD subfamily. Forms a complex with SecF. Part of the essential Sec protein translocation apparatus which comprises SecA, SecYEG and auxiliary proteins SecDF. Other proteins may also be involved.

Its subcellular location is the cell inner membrane. Functionally, part of the Sec protein translocase complex. Interacts with the SecYEG preprotein conducting channel. SecDF uses the proton motive force (PMF) to complete protein translocation after the ATP-dependent function of SecA. This Desulfurispirillum indicum (strain ATCC BAA-1389 / DSM 22839 / S5) protein is Protein translocase subunit SecD.